Here is a 249-residue protein sequence, read N- to C-terminus: Triosephosphate isomerase (249 aa).

Substrate is bound at residue 12 to 14 (NWK). The active-site Electrophile is His-96. The active-site Proton acceptor is Glu-166. Residues Gly-172, Ser-211, and 232-233 (GG) contribute to the substrate site.

It belongs to the triosephosphate isomerase family. As to quaternary structure, homodimer.

It is found in the cytoplasm. The catalysed reaction is D-glyceraldehyde 3-phosphate = dihydroxyacetone phosphate. The protein operates within carbohydrate biosynthesis; gluconeogenesis. It participates in carbohydrate degradation; glycolysis; D-glyceraldehyde 3-phosphate from glycerone phosphate: step 1/1. Involved in the gluconeogenesis. Catalyzes stereospecifically the conversion of dihydroxyacetone phosphate (DHAP) to D-glyceraldehyde-3-phosphate (G3P). This Xanthobacter flavus protein is Triosephosphate isomerase.